We begin with the raw amino-acid sequence, 192 residues long: 7-methyl-GTP pyrophosphatase (192 aa).

Asp-69 (proton acceptor) is an active-site residue.

The protein belongs to the Maf family. YceF subfamily. A divalent metal cation is required as a cofactor.

Its subcellular location is the cytoplasm. It carries out the reaction N(7)-methyl-GTP + H2O = N(7)-methyl-GMP + diphosphate + H(+). Its function is as follows. Nucleoside triphosphate pyrophosphatase that hydrolyzes 7-methyl-GTP (m(7)GTP). May have a dual role in cell division arrest and in preventing the incorporation of modified nucleotides into cellular nucleic acids. The polypeptide is 7-methyl-GTP pyrophosphatase (Pseudomonas fluorescens (strain Pf0-1)).